The chain runs to 323 residues: Sphingolipid delta(4)-desaturase DES1 (323 aa).

2 helical membrane passes run 41–61 (YNLI…FYLV) and 68–88 (WVVF…TLAI). A Histidine box-1 motif is present at residues 89–93 (HEISH). A helical transmembrane segment spans residues 102–122 (AMWNRWFGIFANLPLGLPYSI). The Histidine box-2 signature appears at 128-132 (HMDHH). 3 consecutive transmembrane segments (helical) span residues 159–179 (KFIW…CINP), 185–205 (LEII…YLWG), and 209–229 (IFYM…SGHF). The Histidine box-3 motif lies at 259–263 (HNEHH).

This sequence belongs to the fatty acid desaturase type 1 family. DEGS subfamily. In terms of assembly, interacts with RLBP1; the interaction increases synthesis of chromophore-precursors by DEGS1. Expressed in retina and retinal pigment epithelium by Mueller cells (at protein level).

The protein localises to the endoplasmic reticulum membrane. The catalysed reaction is an N-acylsphinganine + 2 Fe(II)-[cytochrome b5] + O2 + 2 H(+) = an N-acylsphing-4-enine + 2 Fe(III)-[cytochrome b5] + 2 H2O. It carries out the reaction all-trans-retinol = 11-cis-retinol. It catalyses the reaction all-trans-retinol = 9-cis-retinol. The enzyme catalyses all-trans-retinol = 13-cis-retinol. The catalysed reaction is 11-cis-retinol = 13-cis-retinol. It carries out the reaction 11-cis-retinol = 9-cis-retinol. Functionally, has sphingolipid-delta-4-desaturase activity. Converts D-erythro-sphinganine to D-erythro-sphingosine (E-sphing-4-enine). Catalyzes the equilibrium isomerization of retinols. The polypeptide is Sphingolipid delta(4)-desaturase DES1 (DEGS1) (Gallus gallus (Chicken)).